A 405-amino-acid chain; its full sequence is Plasma serine protease inhibitor (405 aa).

The first 19 residues, 1–19, serve as a signal peptide directing secretion; sequence MRFFPILCLVLFISHGVAS. Positions 20-24 are cleaved as a propeptide — removed in mature form; sequence RRHSH. An N-linked (GlcNAc...) asparagine glycan is attached at Asn247.

It belongs to the serpin family. Forms protease inhibiting heterodimers in extracellular body fluids with serine proteases such as activated protein C/coagulation factor V/F5, acrosin/ACR, chymotrypsinogen B/CTRB1, prothrombin/F2, factor Xa/F10, factor XI/F11, kallikrein/KLKB1, tissue kallikrein, trypsin/PRSS1, prostate specific antigen/KLK3, tissue plasminogen activator/PLAT and urinary plasminogen activator/PLAU. Forms membrane-anchored serine proteases inhibiting heterodimers with TMPRSS7 and TMPRSS11E. Interacts with SEMG2. In terms of processing, N-glycosylated; glycans consist of a mixture of sialylated bi- (including sialyl-Lewis X epitopes), tri- and tetra-antennary complex-type chains; affects the maximal heparin- and thrombomodulin-enhanced rates of thrombin inhibition. O-glycosylated; further modified with 2 sialic acid residues. Proteolytically cleaved at the N-terminus; inhibits slightly the heparin- and thrombomodulin-enhanced rates of thrombin inhibition. Proteolytically cleaved. Inhibition of proteases is accompanied by formation of a stable enzyme-inhibitor complex and by degradation of the serpin to lower molecular weight derivatives. Not detected in blood plasma (at protein level). Expressed in testis, epididymis, seminal vesicles, prostate and ovaries.

The protein resides in the secreted. It is found in the extracellular space. Its inhibitory activity is greatly enhanced in the presence of glycosaminoglycans, heparin, thrombomodulin and phospholipids vesicles. In terms of biological role, heparin-dependent serine protease inhibitor acting in body fluids and secretions. Inactivates serine proteases by binding irreversibly to their serine activation site. Involved in the regulation of intravascular and extravascular proteolytic activities. Plays hemostatic roles in the blood plasma. Acts as a procoagulant and pro-inflammatory factor by inhibiting the anticoagulant activated protein C factor as well as the generation of activated protein C factor by the thrombin/thrombomodulin complex. Acts as an anticoagulant factor by inhibiting blood coagulation factors like prothrombin, factor XI, factor Xa, plasma kallikrein and fibrinolytic enzymes such as tissue- and urinary-type plasminogen activators. In seminal plasma, inactivates several serine proteases implicated in the reproductive system. Inhibits the serpin acrosin; indirectly protects component of the male genital tract from being degraded by excessive released acrosin. Inhibits tissue- and urinary-type plasminogen activator, prostate-specific antigen and kallikrein activities; has a control on the sperm motility and fertilization. Inhibits the activated protein C-catalyzed degradation of SEMG1 and SEMG2; regulates the degradation of semenogelin during the process of transfer of spermatozoa from the male reproductive tract into the female tract. In urine, inhibits urinary-type plasminogen activator and kallikrein activities. Inactivates membrane-anchored serine proteases activities such as MPRSS7 and TMPRSS11E. Inhibits urinary-type plasminogen activator-dependent tumor cell invasion and metastasis. May also play a non-inhibitory role in seminal plasma and urine as a hydrophobic hormone carrier by its binding to retinoic acid. This chain is Plasma serine protease inhibitor (Serpina5), found in Mus musculus (Mouse).